The following is a 169-amino-acid chain: Ribosome maturation factor RimM (169 aa).

Positions 93-166 (GEHEFYYHEI…RIQITPLPGL (74 aa)) constitute a PRC barrel domain.

This sequence belongs to the RimM family. As to quaternary structure, binds ribosomal protein uS19.

The protein resides in the cytoplasm. Its function is as follows. An accessory protein needed during the final step in the assembly of 30S ribosomal subunit, possibly for assembly of the head region. Essential for efficient processing of 16S rRNA. May be needed both before and after RbfA during the maturation of 16S rRNA. It has affinity for free ribosomal 30S subunits but not for 70S ribosomes. The polypeptide is Ribosome maturation factor RimM (Exiguobacterium sibiricum (strain DSM 17290 / CCUG 55495 / CIP 109462 / JCM 13490 / 255-15)).